Here is a 1085-residue protein sequence, read N- to C-terminus: Solute carrier family 12 member 4 (1085 aa).

The Cytoplasmic segment spans residues 1 to 119 (MPHFTVVPVD…RRAAKAPSMG (119 aa)). Phosphoserine is present on serine 24. Residues 28-46 (YGERAEREDPDGHGNHRES) are compositionally biased toward basic and acidic residues. A disordered region spans residues 28–47 (YGERAEREDPDGHGNHRESS). Phosphoserine is present on residues serine 47, serine 59, serine 81, and serine 88. A discontinuously helical membrane pass occupies residues 120-141 (TLMGVYLPCLQNIFGVILFLRL). K(+) contacts are provided by asparagine 131 and isoleucine 132. The Extracellular segment spans residues 142–149 (TWMVGTAG). Residues 150 to 172 (VLQALLIVLICCCCTLLTAISMS) traverse the membrane as a helical segment. Topologically, residues 173-196 (AIATNGVVPAGGSYFMISRSLGPE) are cytoplasmic. A helical transmembrane segment spans residues 197–225 (FGGAVGLCFYLGTTFAAAMYILGAIEILL). Position 216 (tyrosine 216) interacts with K(+). The Extracellular portion of the chain corresponds to 226 to 248 (TYIAPPAAIFYPSGTHDTSNATL). A glycan (N-linked (GlcNAc...) asparagine) is linked at asparagine 245. Transmembrane regions (helical) follow at residues 249 to 271 (NNMR…VGVK) and 272 to 297 (YVNK…GGIK). Topologically, residues 298–419 (SMFDPPVFPV…LYVVADIATS (122 aa)) are extracellular. Cysteine 308 and cysteine 323 are joined by a disulfide. 3 N-linked (GlcNAc...) asparagine glycosylation sites follow: asparagine 312, asparagine 331, and asparagine 347. A disulfide bridge links cysteine 343 with cysteine 353. A helical transmembrane segment spans residues 420 to 440 (FTVLVGIFFPSVTGIMAGSNR). K(+) contacts are provided by proline 429 and threonine 432. Chloride is bound by residues glycine 433, isoleucine 434, and methionine 435. Topologically, residues 441 to 450 (SGDLRDAQKS) are cytoplasmic. The helical transmembrane segment at 451–473 (IPVGTILAIVTTSLVYFSSVVLF) threads the bilayer. Topologically, residues 474 to 504 (GACIEGVVLRDKYGDGVSRNLVVGTLAWPSP) are extracellular. The chain crosses the membrane as a helical span at residues 505-531 (WVIVVGSFFSTCGAGLQSLTGAPRLLQ). Over 532-554 (AIAKDNIIPFLRVFGHGKANGEP) the chain is Cytoplasmic. The next 2 membrane-spanning stretches (helical) occupy residues 555–575 (TWAL…ASLD) and 576–598 (MVAP…ACAV). Tyrosine 589 is a binding site for chloride. Over 599-612 (QTLLRTPNWRPRFK) the chain is Cytoplasmic. 2 consecutive transmembrane segments (helical) span residues 613–635 (YYHW…VSSW) and 636–651 (YYAL…IYKY). At 652 to 1085 (IEYQGAEKEW…GGREVITIYS (434 aa)) the chain is on the cytoplasmic side. Residues 665–681 (IRGLSLSAARYALLRLE) form a scissor helix region. Leucine 697, lysine 699, lysine 707, tyrosine 708, and valine 730 together coordinate ATP. The residue at position 734 (serine 734) is a Phosphoserine. The ATP site is built by glycine 794, tryptophan 795, and tyrosine 797. Phosphoserine occurs at positions 916 and 967. Threonine 983 carries the phosphothreonine modification. A Phosphoserine modification is found at serine 1050.

The protein belongs to the SLC12A transporter family. K/Cl co-transporter subfamily. In terms of assembly, homodimer; adopts a domain-swap conformation at the scissor helices connecting the transmembrane domain and C-terminal domain. Heterodimer with other K-Cl cotransporters. N-glycosylated. In terms of processing, phosphorylated, phosphorylation may regulate transporter activity.

Its subcellular location is the cell membrane. It catalyses the reaction K(+)(in) + chloride(in) = K(+)(out) + chloride(out). With respect to regulation, inhibited by WNK3. Its function is as follows. Mediates electroneutral potassium-chloride cotransport when activated by cell swelling. May contribute to cell volume homeostasis in single cells. May be involved in the regulation of basolateral Cl(-) exit in NaCl absorbing epithelia. The sequence is that of Solute carrier family 12 member 4 (SLC12A4) from Oryctolagus cuniculus (Rabbit).